Consider the following 205-residue polypeptide: Heme ligase (205 aa).

Residues 48–203 (KRTIINLIYS…GVVHIVDKPI (156 aa)) form the FAS1 domain. The required for binding to host hemoglobin stretch occupies residues 154-172 (LRNLLNNDLIVKIEGEFKH). Heme binding domain stretches follow at residues 171 to 181 (KHCNHSIYLNG) and 191 to 200 (CHNGVVHIVD).

As to quaternary structure, component of the hemozoin formation complex (HFC) composed of falcipains FP2A and/or FP2B, plasmepsins PMII, PMIII/HAP and PMIV, heme detoxifying protein HDP and falcilysin FLN. The HFC complex is involved in hemoglobin degradation and detoxification of heme in the food vacuole during the asexual blood stage. Interacts with falcipain 2; the interaction is direct and enhances HDP catalytic activity. Interacts with host hemoglobin.

The protein localises to the vacuole. Its subcellular location is the host cytoplasm. It localises to the host cytosol. The catalysed reaction is 2 Fe(III)-heme b = beta-hematin. Heme detoxifying enzyme that converts heme to crystalline hemozoin (beta-hematin) to protect the organism from the toxic effects of heme. During its development, P.falciparum proteolyzes vast amounts of host hemoglobin, leading to heme release. This chain is Heme ligase, found in Plasmodium falciparum (isolate 3D7).